Reading from the N-terminus, the 157-residue chain is Lipoprotein signal peptidase (157 aa).

Helical transmembrane passes span L10 to I30, F58 to L78, and L84 to L104. Active-site residues include D114 and D131. Residues F122 to L142 traverse the membrane as a helical segment.

The protein belongs to the peptidase A8 family.

Its subcellular location is the cell inner membrane. The catalysed reaction is Release of signal peptides from bacterial membrane prolipoproteins. Hydrolyzes -Xaa-Yaa-Zaa-|-(S,diacylglyceryl)Cys-, in which Xaa is hydrophobic (preferably Leu), and Yaa (Ala or Ser) and Zaa (Gly or Ala) have small, neutral side chains.. The protein operates within protein modification; lipoprotein biosynthesis (signal peptide cleavage). This protein specifically catalyzes the removal of signal peptides from prolipoproteins. In Helicobacter pylori (strain ATCC 700392 / 26695) (Campylobacter pylori), this protein is Lipoprotein signal peptidase.